Consider the following 84-residue polypeptide: ATP synthase subunit c (84 aa).

A run of 2 helical transmembrane segments spans residues 1–21 (MLAW…ALVG) and 53–73 (LLFA…VALI).

Belongs to the ATPase C chain family. As to quaternary structure, F-type ATPases have 2 components, F(1) - the catalytic core - and F(0) - the membrane proton channel. F(1) has five subunits: alpha(3), beta(3), gamma(1), delta(1), epsilon(1). F(0) has three main subunits: a(1), b(2) and c(10-14). The alpha and beta chains form an alternating ring which encloses part of the gamma chain. F(1) is attached to F(0) by a central stalk formed by the gamma and epsilon chains, while a peripheral stalk is formed by the delta and b chains.

It localises to the cell inner membrane. Its function is as follows. F(1)F(0) ATP synthase produces ATP from ADP in the presence of a proton or sodium gradient. F-type ATPases consist of two structural domains, F(1) containing the extramembraneous catalytic core and F(0) containing the membrane proton channel, linked together by a central stalk and a peripheral stalk. During catalysis, ATP synthesis in the catalytic domain of F(1) is coupled via a rotary mechanism of the central stalk subunits to proton translocation. In terms of biological role, key component of the F(0) channel; it plays a direct role in translocation across the membrane. A homomeric c-ring of between 10-14 subunits forms the central stalk rotor element with the F(1) delta and epsilon subunits. The protein is ATP synthase subunit c of Dictyoglomus thermophilum (strain ATCC 35947 / DSM 3960 / H-6-12).